Consider the following 315-residue polypeptide: MKIIKISPRGYCYGVVDAMVIARNAALDKSLPRPIYILGMIVHNKHVTDAFEEDGIITLDGPSRLEILDQIDSGTVIFTAHGVSPEVKQRAKEKGLTTIDATCPDVTKTHDLIEAKKSEGYHVIYIGKKGHPEPEGAVGIAPDIVHLIEKADDLKTLEIPTDKILVTNQTTMSQWDVQHLMEDIKKKFPTAEFHKEICLATQVRQEAVAKQADVADLTIVVGDPKSNNSNRLAQVSQEIAGTKAYRVADVSEIQLEWLQGVEAVAVTAGASTPTPITKEVIAFLEQYDPTNPATWERKRNVPLQKILPRVKVKKQ.

Residue Cys-12 coordinates [4Fe-4S] cluster. The (2E)-4-hydroxy-3-methylbut-2-enyl diphosphate site is built by His-43 and His-81. 2 residues coordinate dimethylallyl diphosphate: His-43 and His-81. Residues His-43 and His-81 each coordinate isopentenyl diphosphate. Cys-103 contacts [4Fe-4S] cluster. His-131 provides a ligand contact to (2E)-4-hydroxy-3-methylbut-2-enyl diphosphate. Residue His-131 participates in dimethylallyl diphosphate binding. His-131 serves as a coordination point for isopentenyl diphosphate. The Proton donor role is filled by Glu-133. Thr-170 contributes to the (2E)-4-hydroxy-3-methylbut-2-enyl diphosphate binding site. Residue Cys-198 participates in [4Fe-4S] cluster binding. 3 residues coordinate (2E)-4-hydroxy-3-methylbut-2-enyl diphosphate: Ser-226, Asn-228, and Ser-271. Ser-226, Asn-228, and Ser-271 together coordinate dimethylallyl diphosphate. Residues Ser-226, Asn-228, and Ser-271 each contribute to the isopentenyl diphosphate site.

This sequence belongs to the IspH family. [4Fe-4S] cluster is required as a cofactor.

It carries out the reaction isopentenyl diphosphate + 2 oxidized [2Fe-2S]-[ferredoxin] + H2O = (2E)-4-hydroxy-3-methylbut-2-enyl diphosphate + 2 reduced [2Fe-2S]-[ferredoxin] + 2 H(+). The catalysed reaction is dimethylallyl diphosphate + 2 oxidized [2Fe-2S]-[ferredoxin] + H2O = (2E)-4-hydroxy-3-methylbut-2-enyl diphosphate + 2 reduced [2Fe-2S]-[ferredoxin] + 2 H(+). The protein operates within isoprenoid biosynthesis; dimethylallyl diphosphate biosynthesis; dimethylallyl diphosphate from (2E)-4-hydroxy-3-methylbutenyl diphosphate: step 1/1. It functions in the pathway isoprenoid biosynthesis; isopentenyl diphosphate biosynthesis via DXP pathway; isopentenyl diphosphate from 1-deoxy-D-xylulose 5-phosphate: step 6/6. Catalyzes the conversion of 1-hydroxy-2-methyl-2-(E)-butenyl 4-diphosphate (HMBPP) into a mixture of isopentenyl diphosphate (IPP) and dimethylallyl diphosphate (DMAPP). Acts in the terminal step of the DOXP/MEP pathway for isoprenoid precursor biosynthesis. This is 4-hydroxy-3-methylbut-2-enyl diphosphate reductase from Bacillus cytotoxicus (strain DSM 22905 / CIP 110041 / 391-98 / NVH 391-98).